We begin with the raw amino-acid sequence, 385 residues long: 3-hydroxyisobutyryl-CoA hydrolase, mitochondrial (385 aa).

Residues Glu-120, Gly-145, Glu-168, and Asp-176 each contribute to the substrate site.

It belongs to the enoyl-CoA hydratase/isomerase family.

It localises to the mitochondrion. The enzyme catalyses 3-hydroxy-2-methylpropanoyl-CoA + H2O = 3-hydroxy-2-methylpropanoate + CoA + H(+). It participates in amino-acid degradation; L-valine degradation. Functionally, hydrolyzes 3-hydroxyisobutyryl-CoA (HIBYL-CoA), a saline catabolite. Has high activity toward isobutyryl-CoA. Could be an isobutyryl-CoA dehydrogenase that functions in valine catabolism. Also hydrolyzes 3-hydroxypropanoyl-CoA. In Xenopus laevis (African clawed frog), this protein is 3-hydroxyisobutyryl-CoA hydrolase, mitochondrial (hibch).